Consider the following 328-residue polypeptide: Global transcription regulator sge1 (328 aa).

Disordered regions lie at residues 94–120 (PGEKKRAKGKGGKSTTQSGGISKPRQR) and 251–293 (QMHQ…QYVH). Low complexity-rich tracts occupy residues 106-116 (KSTTQSGGISK), 251-261 (QMHQPQVHQPL), and 282-293 (AHQPQVHQQYVH).

Belongs to the MIT1/WOR1 family.

It is found in the nucleus. Global transcriptional regulator of transcription that impacts, but is not absolutely required for secondary metabolism and pathogenicity on maize. Regulates synthesis of multiple secondary metabolites, including fumonisins and fusarins. This chain is Global transcription regulator sge1, found in Gibberella moniliformis (strain M3125 / FGSC 7600) (Maize ear and stalk rot fungus).